A 552-amino-acid polypeptide reads, in one-letter code: Ribulokinase (552 aa).

It belongs to the ribulokinase family.

The catalysed reaction is D-ribulose + ATP = D-ribulose 5-phosphate + ADP + H(+). It catalyses the reaction L-ribulose + ATP = L-ribulose 5-phosphate + ADP + H(+). It participates in carbohydrate degradation; L-arabinose degradation via L-ribulose; D-xylulose 5-phosphate from L-arabinose (bacterial route): step 2/3. This is Ribulokinase from Bacillus licheniformis (strain ATCC 14580 / DSM 13 / JCM 2505 / CCUG 7422 / NBRC 12200 / NCIMB 9375 / NCTC 10341 / NRRL NRS-1264 / Gibson 46).